The chain runs to 423 residues: Lysosomal acid phosphatase (423 aa).

An N-terminal signal peptide occupies residues 1 to 30; sequence MAGKRSGWSRAALLQLLLGVNLVVMPPTRA. Residues 31-380 lie on the Lumenal side of the membrane; sequence RSLRFVTLLY…QLASGPADTE (350 aa). H42 (nucleophile) is an active-site residue. 6 N-linked (GlcNAc...) asparagine glycosylation sites follow: N92, N133, N167, N177, N191, and N267. 3 disulfide bridges follow: C159–C370, C212–C310, and C345–C349. The Proton donor role is filled by D287. N322 and N331 each carry an N-linked (GlcNAc...) asparagine glycan. The helical transmembrane segment at 381 to 401 threads the bilayer; the sequence is VIVALAVCGSILFLLIVLLLT. Topologically, residues 402–423 are cytoplasmic; it reads VLFRMQAQPPGYRHVADGEDHA.

It belongs to the histidine acid phosphatase family. The membrane-bound form is converted to the soluble form by sequential proteolytic processing. First, the C-terminal cytoplasmic tail is removed. Cleavage by a lysosomal protease releases the soluble form in the lysosome lumen. Post-translationally, N-glycosylated. The intermediates formed during enzymatic deglycosylation suggest that all eight predicted N-glycosylation sites are used.

The protein localises to the lysosome membrane. It localises to the lysosome lumen. The enzyme catalyses a phosphate monoester + H2O = an alcohol + phosphate. The sequence is that of Lysosomal acid phosphatase (ACP2) from Homo sapiens (Human).